The sequence spans 549 residues: MDRSKVANAFAALDAYARRSGAPKIADLFAADPQRFDRFHARFDDLLYDFSKHRLDAETLRLLLDLGRAAEVEPRREALFEGDPVNITERRAALHMALRNLSGAPMRAAGEDVAAMVEAEREKLLAFAEAVRSGAIRAANGARFTDIVNFGIGGSDLGPAMAARALSPFIADHLRLHFVANVDGADFADTMRNTPVETTLFIVCSKTFTTLETMTNAATARAYVAERLGPDAIASHFCAVSTQLDRIAAFGVRSDRVFGFWDWVGGRYSIWSSIGLSLAIGVGRDNFEAFLRGGEDIDRHFREAPLERNIPVLMALIGVLNRNVFGYATQAVIPYDQRLARFPAYLQQLDMESNGKSVDLSGARVAYETSPVVWGEPGTNGQHAFFQLLHQGTEIVPVDFLVAAKPTAADETHHRILFANCLAQSQALMQGRPLEAVSAQLAAQGLSPDAIAALAPHKVFDGDRPSSTFLYTALTPRTLGRLIALYEHKIFVQGVIWDINSFDQWGVELGKELAQKLAPIVGDDSASTEALDASTAGLVQAARARRAGA.

The active-site Proton donor is Glu-352. Catalysis depends on residues His-383 and Lys-511.

Belongs to the GPI family.

It is found in the cytoplasm. It carries out the reaction alpha-D-glucose 6-phosphate = beta-D-fructose 6-phosphate. The protein operates within carbohydrate biosynthesis; gluconeogenesis. It functions in the pathway carbohydrate degradation; glycolysis; D-glyceraldehyde 3-phosphate and glycerone phosphate from D-glucose: step 2/4. Functionally, catalyzes the reversible isomerization of glucose-6-phosphate to fructose-6-phosphate. The sequence is that of Glucose-6-phosphate isomerase from Methylocella silvestris (strain DSM 15510 / CIP 108128 / LMG 27833 / NCIMB 13906 / BL2).